We begin with the raw amino-acid sequence, 373 residues long: MTKQFDIVVFPGDYGGPEVMAEGIKVLKAIERKHQSDVSFNLKYHLIGGASFDIHDTPITTEALEDAKAASAVLLGAVGGPKWDGTPVPVESGLGRLRKFLDAFGNIRPVNFIAPSLVNCSSFKEHVVSGTDITIVRELTGGIYFGARQEHDGSFNSASDLDHYDRDSIVRAARLAGKLAMSRQPHLPVTSLDKANLLAACGRLWRGVVKEVFETEFPTIKLSHMLIDTAAMNVARRPTSLNGIILTSNMFGDIISDEASAIPGSLGLLPSASLCAIPTVLDASKVRGIYEPIHGSAPDIAGQGIINPTGMILSVAMMLRYSLAMPEAADSIEAAVGKVIEDDCRTSDIGGRASTADFGDAVVIALRNCLDKN.

Positions 92, 98, and 108 each coordinate substrate. Mg(2+) is bound by residues D228, D253, and D257. NADP(+) contacts are provided by residues 294 to 300 (HGSAPDI) and N307.

It belongs to the isocitrate and isopropylmalate dehydrogenases family. In terms of assembly, homodimer. Requires Mg(2+) as cofactor. Mn(2+) is required as a cofactor.

It catalyses the reaction (2R,3S)-3-isopropylmalate + NAD(+) = 4-methyl-2-oxopentanoate + CO2 + NADH. Its pathway is mycotoxin biosynthesis. In terms of biological role, 3-isopropylmalate dehydrogenase; part of the gene cluster that mediates the biosynthesis of pneumocandins, lipohexapeptides of the echinocandin family that prevent fungal cell wall formation by non-competitive inhibition of beta-1,3-glucan synthase. The 10,12-dimethylmyristoyl side chain is synthesized by the reducing polyketide synthase gloL/GLPKS4. The thioesterase gloN/GLHYD exclusively interacts with gloL/GLPKS4 to maintain turnover of the polyketide side chain. The 10R,12S-dimethylmyristic acid is then transferred to the first thiolation domain of the nonribosomal peptide synthetase gloA/GLNRPS4 by the acyl-AMP ligase gloD/GLligase, followed by its acylation to L-ornithine to trigger elongation of the cyclic hexapeptide. L-ornithine, 4R-hydroxyl-L-proline (generated from L-proline by the dioxygenase gloF/GLOXY2), 3S-hydroxyl-L-homotyrosine (generated by gloG/GLHtyB, gloH/GLHtyA, gloI/GLHtyC, gloJ/GLHtyD and hydroxylated at C-3 by the dioxygenase gloM/GLOXY1), 3R-hydroxyl-L-glutamine (generated from L-glutamine probably by the dioxygenase gloE/GLOXY3) and 3S-hydroxyl-L-proline (generated from L-proline by the dioxygenase gloF/GLOXY2 to yield pneumocandin B0), or 3S-hydroxyl-4S-methyl-L-proline (generated from L-leucine by the dioxygenase gloC/GLOXY4 to yield pneumocandin A0) are sequentially added to the growing chain. The last C domain of gloA/GLNRPS4 is proposed to be responsible for cyclization by condensation to form the peptide bond between L-ornithine and 3S-hydroxyl-4S-methyl-L-proline (for pneumocandin A0) or 3S-hydroxyl-L-proline (for pneumocandin B0). Finally, the subsequent C-4 hydroxylation of 3S-hydroxyl-L-homotyrosine and L-ornithine dihydroxylation at C-4 and C-5 are performed by the cytochrome P450 monooxygenases gloP/GLP450-1 and gloO/GLP450-2, respectively. This chain is 3-isopropylmalate dehydrogenase gloI, found in Glarea lozoyensis (strain ATCC 20868 / MF5171).